A 622-amino-acid chain; its full sequence is Chaperone protein HscA homolog (622 aa).

The protein belongs to the heat shock protein 70 family.

Functionally, chaperone involved in the maturation of iron-sulfur cluster-containing proteins. Has a low intrinsic ATPase activity which is markedly stimulated by HscB. The protein is Chaperone protein HscA homolog of Pseudoalteromonas atlantica (strain T6c / ATCC BAA-1087).